The primary structure comprises 244 residues: Ribonuclease PH (244 aa).

Phosphate-binding positions include Arg90 and 128–130 (GTR).

The protein belongs to the RNase PH family. As to quaternary structure, homohexameric ring arranged as a trimer of dimers.

The enzyme catalyses tRNA(n+1) + phosphate = tRNA(n) + a ribonucleoside 5'-diphosphate. Functionally, phosphorolytic 3'-5' exoribonuclease that plays an important role in tRNA 3'-end maturation. Removes nucleotide residues following the 3'-CCA terminus of tRNAs; can also add nucleotides to the ends of RNA molecules by using nucleoside diphosphates as substrates, but this may not be physiologically important. Probably plays a role in initiation of 16S rRNA degradation (leading to ribosome degradation) during starvation. The chain is Ribonuclease PH from Cutibacterium acnes (strain DSM 16379 / KPA171202) (Propionibacterium acnes).